A 179-amino-acid chain; its full sequence is Probable inosine/xanthosine triphosphatase (179 aa).

A substrate-binding site is contributed by 13-18; the sequence is STNPVK. Residue Gln-70 participates in Mg(2+) binding.

Belongs to the YjjX NTPase family. As to quaternary structure, homodimer. Mg(2+) serves as cofactor. Requires Mn(2+) as cofactor.

The catalysed reaction is XTP + H2O = XDP + phosphate + H(+). The enzyme catalyses ITP + H2O = IDP + phosphate + H(+). Its function is as follows. Phosphatase that hydrolyzes non-canonical purine nucleotides such as XTP and ITP to their respective diphosphate derivatives. Probably excludes non-canonical purines from DNA/RNA precursor pool, thus preventing their incorporation into DNA/RNA and avoiding chromosomal lesions. The protein is Probable inosine/xanthosine triphosphatase of Methanocaldococcus jannaschii (strain ATCC 43067 / DSM 2661 / JAL-1 / JCM 10045 / NBRC 100440) (Methanococcus jannaschii).